A 130-amino-acid polypeptide reads, in one-letter code: Small ribosomal subunit protein uS11c (130 aa).

It belongs to the universal ribosomal protein uS11 family. In terms of assembly, part of the 30S ribosomal subunit.

The protein localises to the plastid. It localises to the chloroplast. This chain is Small ribosomal subunit protein uS11c, found in Mesostigma viride (Green alga).